Consider the following 361-residue polypeptide: Peptide chain release factor 1 (361 aa).

N5-methylglutamine is present on Gln236. A compositionally biased stretch (basic and acidic residues) spans 285-309 (TAKDSARAADRKAQVGSGDRSERIR). A disordered region spans residues 285–313 (TAKDSARAADRKAQVGSGDRSERIRTYNF).

It belongs to the prokaryotic/mitochondrial release factor family. Post-translationally, methylated by PrmC. Methylation increases the termination efficiency of RF1.

Its subcellular location is the cytoplasm. In terms of biological role, peptide chain release factor 1 directs the termination of translation in response to the peptide chain termination codons UAG and UAA. This is Peptide chain release factor 1 from Methylorubrum populi (strain ATCC BAA-705 / NCIMB 13946 / BJ001) (Methylobacterium populi).